A 160-amino-acid chain; its full sequence is Sulfur-rich protein (160 aa).

The next 2 membrane-spanning stretches (helical) occupy residues 62 to 82 (ITMV…TFVL) and 91 to 111 (FLFL…SVFM).

Its subcellular location is the membrane. This is Sulfur-rich protein (srp) from Chlamydia caviae (strain ATCC VR-813 / DSM 19441 / 03DC25 / GPIC) (Chlamydophila caviae).